The primary structure comprises 337 residues: Ferrochelatase (337 aa).

The Fe cation site is built by His189 and Glu293.

Belongs to the ferrochelatase family.

Its subcellular location is the cytoplasm. The enzyme catalyses heme b + 2 H(+) = protoporphyrin IX + Fe(2+). It participates in porphyrin-containing compound metabolism; protoheme biosynthesis; protoheme from protoporphyrin-IX: step 1/1. In terms of biological role, catalyzes the ferrous insertion into protoporphyrin IX. This chain is Ferrochelatase, found in Pseudomonas entomophila (strain L48).